The sequence spans 203 residues: Meiotically up-regulated protein PB17E12.09 (203 aa).

Residues C92–I177 adopt a coiled-coil conformation.

The protein resides in the cytoplasm. Has a role in meiosis and sporulation. In Schizosaccharomyces pombe (strain 972 / ATCC 24843) (Fission yeast), this protein is Meiotically up-regulated protein PB17E12.09.